Reading from the N-terminus, the 430-residue chain is Histidine--tRNA ligase (430 aa).

Belongs to the class-II aminoacyl-tRNA synthetase family. In terms of assembly, homodimer.

Its subcellular location is the cytoplasm. The catalysed reaction is tRNA(His) + L-histidine + ATP = L-histidyl-tRNA(His) + AMP + diphosphate + H(+). In Lactococcus lactis subsp. lactis (strain IL1403) (Streptococcus lactis), this protein is Histidine--tRNA ligase.